We begin with the raw amino-acid sequence, 237 residues long: Orotidine 5'-phosphate decarboxylase (237 aa).

Substrate-binding positions include Asp-11, Lys-34, 61–70 (DLKLHDIPNT), Thr-124, Arg-186, Gln-195, Gly-215, and Arg-216. The active-site Proton donor is the Lys-63.

The protein belongs to the OMP decarboxylase family. Type 1 subfamily. In terms of assembly, homodimer.

The enzyme catalyses orotidine 5'-phosphate + H(+) = UMP + CO2. Its pathway is pyrimidine metabolism; UMP biosynthesis via de novo pathway; UMP from orotate: step 2/2. Functionally, catalyzes the decarboxylation of orotidine 5'-monophosphate (OMP) to uridine 5'-monophosphate (UMP). The protein is Orotidine 5'-phosphate decarboxylase of Lactococcus lactis subsp. cremoris (strain MG1363).